A 310-amino-acid polypeptide reads, in one-letter code: MKPAIPPTINLHTIRACNYGCKYCFAGFQDCDTGVMPQADLHEILRQFAATTGMAIHPAKVNFAGGEPMLSPTFVEDICYAKSLGLTTSLVTNGSLLSERLLDKLSGQLDLLTISIDSLKPGTNRAIGRTNRQNPLTVSEYLDRILKARTRGITVKLNTVVNRLNLDEDMTDFIREAQPIRWKLFKVLKIQNENSAHFDSWAIRDEEFVHFVERHRKVESSGVTLVPESNEQMYGTYGIISPDGRFIDNSQGTHRYSPRIVDVGITQAFADVNFSMAGFQQRGGIYSIKRSTTNRSLQTSALHPKRELTK.

One can recognise a Radical SAM core domain in the interval 3–221 (PAIPPTINLH…VERHRKVESS (219 aa)). [4Fe-4S] cluster contacts are provided by cysteine 17, cysteine 21, and cysteine 24.

The protein belongs to the radical SAM superfamily. Viperin family. The cofactor is [4Fe-4S] cluster.

The enzyme catalyses GTP + AH2 + S-adenosyl-L-methionine = 3'-deoxy-3',4'-didehydro-GTP + 5'-deoxyadenosine + L-methionine + A + H2O + H(+). In terms of biological role, expression of pVip15 in E.coli (strain MG1655) confers resistance to phage T7; prevents culture collapse upon infection. Catalyzes the conversion of guanosine triphosphate (GTP) to 3'-deoxy-3',4'-didehydro-GTP (ddhGTP), probably via a SAM-dependent radical mechanism. The modified nucleotide represses transcription from T7 RNA polymerase-directed genes (possibly by acting as chain terminators), strongly suggesting these nucleotides block viral polymerase transcription. This Coraliomargarita akajimensis (strain DSM 45221 / IAM 15411 / JCM 23193 / KCTC 12865 / 04OKA010-24) protein is S-adenosylmethionine-dependent nucleotide dehydratase.